Reading from the N-terminus, the 164-residue chain is Dehydrin Rab16B (164 aa).

Residues 1–164 are disordered; sequence MENYQGQHGY…KIKEKLPGQH (164 aa). A compositionally biased stretch (gly residues) spans 25–53; that stretch reads GQYGGGATAPGGGHGAMGMGGHAGAGAGG. Positions 107 to 117 are enriched in low complexity; it reads GNNQQQQQMMG. Basic and acidic residues predominate over residues 147–164; it reads GEKKGFMDKIKEKLPGQH.

It belongs to the plant dehydrin family.

The protein is Dehydrin Rab16B (RAB16B) of Oryza sativa subsp. indica (Rice).